The primary structure comprises 565 residues: Mediator of RNA polymerase II transcription subunit 1 (565 aa).

The interval Ser141 to Gly170 is disordered.

This sequence belongs to the Mediator complex subunit 1 family. As to quaternary structure, component of the Mediator complex.

The protein resides in the nucleus. Its function is as follows. Component of the Mediator complex, a coactivator involved in the regulated transcription of nearly all RNA polymerase II-dependent genes. Mediator functions as a bridge to convey information from gene-specific regulatory proteins to the basal RNA polymerase II transcription machinery. Mediator is recruited to promoters by direct interactions with regulatory proteins and serves as a scaffold for the assembly of a functional preinitiation complex with RNA polymerase II and the general transcription factors. This Candida glabrata (strain ATCC 2001 / BCRC 20586 / JCM 3761 / NBRC 0622 / NRRL Y-65 / CBS 138) (Yeast) protein is Mediator of RNA polymerase II transcription subunit 1 (MED1).